Reading from the N-terminus, the 388-residue chain is Succinate--CoA ligase [ADP-forming] subunit beta (388 aa).

The ATP-grasp domain occupies 9-244; it reads KEIFARYGLP…PTQESELEVK (236 aa). ATP contacts are provided by residues lysine 46, 53–55, glutamate 99, threonine 102, and glutamate 107; that span reads GRG. Positions 199 and 213 each coordinate Mg(2+). Substrate contacts are provided by residues asparagine 264 and 321–323; that span reads GIL.

Belongs to the succinate/malate CoA ligase beta subunit family. In terms of assembly, heterotetramer of two alpha and two beta subunits. The cofactor is Mg(2+).

The catalysed reaction is succinate + ATP + CoA = succinyl-CoA + ADP + phosphate. It catalyses the reaction GTP + succinate + CoA = succinyl-CoA + GDP + phosphate. It participates in carbohydrate metabolism; tricarboxylic acid cycle; succinate from succinyl-CoA (ligase route): step 1/1. In terms of biological role, succinyl-CoA synthetase functions in the citric acid cycle (TCA), coupling the hydrolysis of succinyl-CoA to the synthesis of either ATP or GTP and thus represents the only step of substrate-level phosphorylation in the TCA. The beta subunit provides nucleotide specificity of the enzyme and binds the substrate succinate, while the binding sites for coenzyme A and phosphate are found in the alpha subunit. This chain is Succinate--CoA ligase [ADP-forming] subunit beta, found in Persephonella marina (strain DSM 14350 / EX-H1).